Consider the following 547-residue polypeptide: CAP-Gly domain-containing linker protein 3 (547 aa).

The interval Met1–Ala49 is disordered. The segment covering Glu16 to Val27 has biased composition (acidic residues). ANK repeat units follow at residues Thr117–Leu155, Thr160–Val189, and Asn197–Leu226. A CAP-Gly 1 domain is found at Gly314–Ser356. Residues Asp365–Arg413 form a disordered region. Residues Pro367–Thr377 are compositionally biased toward low complexity. Residue Thr374 is modified to Phosphothreonine. Over residues Gly387–Thr399 the composition is skewed to basic residues. Over residues Pro400–Gln409 the composition is skewed to polar residues. A Phosphoserine modification is found at Ser401. Residues Gly436–Pro478 form the CAP-Gly 2 domain. Positions Ser488–Ser547 are goLD. Residues Cys534 and Cys535 are each lipidated (S-palmitoyl cysteine).

Homodimer. Interacts with AKT1 and AKT2; when AKT1 and AKT2 are phosphorylated and activated, affinity is higher for AKT2. Interacts with ZDHHC13 (via ANK repeats). Interacts with ZDHHC17 (via ANK repeats). Post-translationally, palmitoylation by ZDHHC17 regulates association with the plasma membrane.

The protein localises to the cell membrane. Its subcellular location is the cytoplasm. It is found in the golgi apparatus. It localises to the golgi stack. Its function is as follows. Functions as a cytoplasmic linker protein. Involved in TGN-endosome dynamics. May modulate the cellular compartmentalization of AKT kinase family and promote its cell membrane localization, thereby playing a role in glucose transport in adipocytes. In Pongo abelii (Sumatran orangutan), this protein is CAP-Gly domain-containing linker protein 3 (CLIP3).